The chain runs to 200 residues: Ciliary microtubule inner protein 2C (200 aa).

It belongs to the CIMIP2 family. As to quaternary structure, microtubule inner protein component of sperm flagellar doublet microtubules.

The protein resides in the cytoplasm. Its subcellular location is the cytoskeleton. It is found in the cilium axoneme. The protein localises to the flagellum axoneme. Functionally, microtubule inner protein (MIP) part of the dynein-decorated doublet microtubules (DMTs) in cilia axoneme, which is required for motile cilia beating. Binds to the intra-tubulin interfaces. The sequence is that of Ciliary microtubule inner protein 2C (Cimip2c) from Mus musculus (Mouse).